A 188-amino-acid chain; its full sequence is UPF0301 protein Smlt1098 (188 aa).

It belongs to the UPF0301 (AlgH) family.

The chain is UPF0301 protein Smlt1098 from Stenotrophomonas maltophilia (strain K279a).